Here is a 470-residue protein sequence, read N- to C-terminus: Serine hydroxymethyltransferase, cytosolic (470 aa).

Positions 1-11 (MSAYALSQSHR) are enriched in polar residues. The tract at residues 1–23 (MSAYALSQSHRQLTEGHLKDTDP) is disordered. At serine 2 the chain carries N-acetylserine. Positions 12 to 23 (QLTEGHLKDTDP) are enriched in basic and acidic residues. Lysine 249 bears the N6-(pyridoxal phosphate)lysine mark.

The protein belongs to the SHMT family. Homotetramer. Requires pyridoxal 5'-phosphate as cofactor.

It localises to the cytoplasm. It carries out the reaction (6R)-5,10-methylene-5,6,7,8-tetrahydrofolate + glycine + H2O = (6S)-5,6,7,8-tetrahydrofolate + L-serine. It participates in one-carbon metabolism; tetrahydrofolate interconversion. Functionally, interconversion of serine and glycine. The chain is Serine hydroxymethyltransferase, cytosolic (SHM2) from Candida albicans (strain SC5314 / ATCC MYA-2876) (Yeast).